We begin with the raw amino-acid sequence, 511 residues long: Bifunctional purine biosynthesis protein PurH (511 aa).

One can recognise an MGS-like domain in the interval 1-145; it reads MKKRALVSVS…KNHKFVSVIV (145 aa).

Belongs to the PurH family.

It catalyses the reaction (6R)-10-formyltetrahydrofolate + 5-amino-1-(5-phospho-beta-D-ribosyl)imidazole-4-carboxamide = 5-formamido-1-(5-phospho-D-ribosyl)imidazole-4-carboxamide + (6S)-5,6,7,8-tetrahydrofolate. The enzyme catalyses IMP + H2O = 5-formamido-1-(5-phospho-D-ribosyl)imidazole-4-carboxamide. The protein operates within purine metabolism; IMP biosynthesis via de novo pathway; 5-formamido-1-(5-phospho-D-ribosyl)imidazole-4-carboxamide from 5-amino-1-(5-phospho-D-ribosyl)imidazole-4-carboxamide (10-formyl THF route): step 1/1. It participates in purine metabolism; IMP biosynthesis via de novo pathway; IMP from 5-formamido-1-(5-phospho-D-ribosyl)imidazole-4-carboxamide: step 1/1. The sequence is that of Bifunctional purine biosynthesis protein PurH from Bacillus cereus (strain ATCC 14579 / DSM 31 / CCUG 7414 / JCM 2152 / NBRC 15305 / NCIMB 9373 / NCTC 2599 / NRRL B-3711).